We begin with the raw amino-acid sequence, 161 residues long: uncharacterized protein (161 aa).

This is an uncharacterized protein from Archaeoglobus fulgidus (strain ATCC 49558 / DSM 4304 / JCM 9628 / NBRC 100126 / VC-16).